The following is a 219-amino-acid chain: Oligoribonuclease (219 aa).

Residues 19 to 184 form the Exonuclease domain; sequence LVWVDLEMTG…ADIVESIREL (166 aa). Tyr141 is an active-site residue.

The protein belongs to the oligoribonuclease family.

Its subcellular location is the cytoplasm. Functionally, 3'-to-5' exoribonuclease specific for small oligoribonucleotides. In Corynebacterium glutamicum (strain R), this protein is Oligoribonuclease.